Here is a 259-residue protein sequence, read N- to C-terminus: Small ribosomal subunit protein uS2 (259 aa).

The interval 234–259 is disordered; the sequence is VAEDSEEVSTVDADAITAEDFETEEV. Residues 250–259 show a composition bias toward acidic residues; sequence TAEDFETEEV.

This sequence belongs to the universal ribosomal protein uS2 family.

The sequence is that of Small ribosomal subunit protein uS2 from Sulfurimonas denitrificans (strain ATCC 33889 / DSM 1251) (Thiomicrospira denitrificans (strain ATCC 33889 / DSM 1251)).